Reading from the N-terminus, the 159-residue chain is RNA pyrophosphohydrolase (159 aa).

The Nudix hydrolase domain occupies 6–149 (GFRPNVGIIL…KREVYRRALK (144 aa)). The Nudix box motif lies at 38-59 (GGINPDETPEDALYRELNEEVG).

The protein belongs to the Nudix hydrolase family. RppH subfamily. Requires a divalent metal cation as cofactor.

Its function is as follows. Accelerates the degradation of transcripts by removing pyrophosphate from the 5'-end of triphosphorylated RNA, leading to a more labile monophosphorylated state that can stimulate subsequent ribonuclease cleavage. The protein is RNA pyrophosphohydrolase of Pseudomonas entomophila (strain L48).